A 584-amino-acid polypeptide reads, in one-letter code: (+)-larreatricin hydroxylase, chloroplastic (584 aa).

Residues 1 to 32 (MASLSSQSKLLATPYSFPYHTKPSRVSLRRVS) constitute a chloroplast transit peptide. The N-terminal 47 residues, 33–79 (CKASNDNKDKPNDQEKTFSIDRRNMLIGLGGLYGASNVFPSNQSTLA), are a transit peptide targeting the thylakoid. Cystine bridges form between Cys-91–Cys-106 and Cys-105–Cys-168. His-167, His-188, His-197, His-319, His-323, and His-353 together coordinate Cu cation. The segment at residues 171-188 (CNGAYDQVGFPDVNIQVH) is a cross-link (2'-(S-cysteinyl)-histidine (Cys-His)). Residues 432–584 (RLRSKATTTT…KIEFVRDEED (153 aa)) constitute a propeptide, removed in mature form.

This sequence belongs to the tyrosinase family. Cu(2+) serves as cofactor.

The protein localises to the plastid. It is found in the chloroplast thylakoid lumen. The catalysed reaction is (+)-larreatricin + AH2 + O2 = (+)-3'-hydroxylarreatricin + A + H2O. Functionally, enantio-specific polyphenol oxidase involved in aromatic ring hydroxylation. Involved in the biosynthesis of the creosote bush 8-8' linked lignans. Has a strong preference for the 3' position of (+)-larreatricin. The chain is (+)-larreatricin hydroxylase, chloroplastic from Larrea tridentata (Creosote bush).